We begin with the raw amino-acid sequence, 156 residues long: Small ribosomal subunit protein uS7 (156 aa).

It belongs to the universal ribosomal protein uS7 family. Part of the 30S ribosomal subunit. Contacts proteins S9 and S11.

Its function is as follows. One of the primary rRNA binding proteins, it binds directly to 16S rRNA where it nucleates assembly of the head domain of the 30S subunit. Is located at the subunit interface close to the decoding center, probably blocks exit of the E-site tRNA. The polypeptide is Small ribosomal subunit protein uS7 (Thermodesulfovibrio yellowstonii (strain ATCC 51303 / DSM 11347 / YP87)).